The primary structure comprises 54 residues: FATVDCSEYPKPVCSPEYMPLCGSDSKTYNNKCDFCSAVVESNGTLTLGHFGKC.

Residues 4-54 enclose the Kazal-like domain; it reads VDCSEYPKPVCSPEYMPLCGSDSKTYNNKCDFCSAVVESNGTLTLGHFGKC. Cystine bridges form between Cys-6-Cys-36, Cys-14-Cys-33, and Cys-22-Cys-54. A glycan (N-linked (GlcNAc...) asparagine) is linked at Asn-43.

The protein resides in the secreted. The polypeptide is Ovomucoid (Casuarius casuarius (Southern cassowary)).